Consider the following 99-residue polypeptide: Cell division protein FtsB (99 aa).

Topologically, residues 1 to 3 are cytoplasmic; the sequence is MKF. Residues 4-21 form a helical membrane-spanning segment; that stretch reads FVIALIVLLGLLQYRLWS. Topologically, residues 22–99 are periplasmic; the sequence is GDNSLPEYFV…GDRSVSSPSQ (78 aa). Positions 31–73 form a coiled coil; the sequence is VLQKQIAAQQDGNAKLNERNQVLKEEIIDLKSGTEAIEERARN.

It belongs to the FtsB family. In terms of assembly, part of a complex composed of FtsB, FtsL and FtsQ.

It localises to the cell inner membrane. Its function is as follows. Essential cell division protein. May link together the upstream cell division proteins, which are predominantly cytoplasmic, with the downstream cell division proteins, which are predominantly periplasmic. The chain is Cell division protein FtsB from Shewanella sp. (strain MR-4).